The sequence spans 867 residues: Mitochondrial escape protein 2 (867 aa).

Residues 1–25 (MIIRTLRSQLRLPKPVYISPPCRYY) constitute a mitochondrion transit peptide. Topologically, residues 26-279 (STDLEKLKKE…LVSLISNHTK (254 aa)) are mitochondrial matrix. The RRM domain maps to 179–264 (GTPWIEDLRR…TTLHIQFVAI (86 aa)). A helical membrane pass occupies residues 280 to 300 (IAIPVLIALLATFAVLIFDPI). The Mitochondrial intermembrane segment spans residues 301–867 (REWFIEYKIL…DGKSFLGIKF (567 aa)). Residues 795 to 852 (IGRLISLEAAKIQKLEEELEKIYKIGKVDGRIDYVSQKIEASNKKILDLEKQAADVAS) are a coiled coil.

The protein belongs to the YME2 family.

Its subcellular location is the mitochondrion inner membrane. In terms of biological role, plays a role in maintaining the mitochondrial genome and in controlling the mtDNA escape. Involved in the regulation of mtDNA nucleotide structure and number. May have a dispensable role in early maturation of pre-rRNA. This Candida albicans (strain SC5314 / ATCC MYA-2876) (Yeast) protein is Mitochondrial escape protein 2 (PRP13).